Here is a 20-residue protein sequence, read N- to C-terminus: Putative 60 kDa spermidine-binding protein (20 aa).

Positions 1 to 20 (SXAAVVEPPETSQNRIAKGE) are disordered. Positions 10–20 (ETSQNRIAKGE) are enriched in polar residues.

In terms of assembly, dimer of 18 kDa and 60 kDa subunit.

The protein resides in the microsome membrane. It localises to the endoplasmic reticulum membrane. In terms of biological role, may have spermidine-binding activity. This is Putative 60 kDa spermidine-binding protein from Zea mays (Maize).